Here is a 344-residue protein sequence, read N- to C-terminus: Phenylalanine--tRNA ligase alpha subunit (344 aa).

E256 contributes to the Mg(2+) binding site.

Belongs to the class-II aminoacyl-tRNA synthetase family. Phe-tRNA synthetase alpha subunit type 1 subfamily. Tetramer of two alpha and two beta subunits. The cofactor is Mg(2+).

Its subcellular location is the cytoplasm. It carries out the reaction tRNA(Phe) + L-phenylalanine + ATP = L-phenylalanyl-tRNA(Phe) + AMP + diphosphate + H(+). This Anoxybacillus flavithermus (strain DSM 21510 / WK1) protein is Phenylalanine--tRNA ligase alpha subunit.